Reading from the N-terminus, the 70-residue chain is Small ribosomal subunit protein bS21C (70 aa).

Residues 38 to 70 (YEKPTTERKRKKAAAVARLRKQVRRSMPPKKKY) form a disordered region. Positions 45-70 (RKRKKAAAVARLRKQVRRSMPPKKKY) are enriched in basic residues.

It belongs to the bacterial ribosomal protein bS21 family.

The protein is Small ribosomal subunit protein bS21C of Burkholderia thailandensis (strain ATCC 700388 / DSM 13276 / CCUG 48851 / CIP 106301 / E264).